Reading from the N-terminus, the 200-residue chain is Inducible T-cell costimulator (200 aa).

A signal peptide spans 1–20 (MKPYFSCVFVFCFLIKLLTG). At 21-145 (ELNDLANHRM…LCCQLKLWLP (125 aa)) the chain is on the extracellular side. Residues 30–133 (MFSFHDGGVQ…LSGGYLLIYE (104 aa)) form the Ig-like V-type domain. Intrachain disulfides connect Cys-42-Cys-109 and Cys-63-Cys-83. Asn-89 and Asn-123 each carry an N-linked (GlcNAc...) asparagine glycan. Residues 146 to 166 (VGCAAFVAALLFGCIFIVWFA) traverse the membrane as a helical segment. Residues 167 to 200 (KKKYRSSVHDPNSEYMFMAAVNTNKKSRLAGMTS) lie on the Cytoplasmic side of the membrane.

In terms of assembly, homodimer; disulfide-linked. Interacts with ICOSLG. Interacts with PIK3R1. Interacts with TBK1; this interaction is critical for the maturation of T follicular regulatory cells. Post-translationally, N-glycosylated. As to expression, strongly expressed in the spleen and lung. Lower expression seen in liver, kidney and testis.

It localises to the cell membrane. Stimulatory receptor expressed in activated or antigen-experienced T-cells that plays an important role in the immune response. Upon binding to its ligand ICOSL expressed on antigen presenting cells (APCs), delivers costimulatory signals that enhances all basic T-cell responses to a foreign antigen, namely proliferation, secretion of lymphokines including IL10, up-regulation of molecules that mediate cell-cell interaction, and effective help for antibody secretion by B-cells. Also acts as a costimulatory receptor critical for the differentiation of T follicular regulatory cells upon immune challenges such as viral infection. Mechanistically, potentiates TCR-induced calcium flux by augmenting PLCG1 activation and actin remodeling. In addition, activates PI3K signaling pathways independently of calcium flux. Essential both for efficient interaction between T and B-cells and for normal antibody responses to T-cell dependent antigens. Prevents the apoptosis of pre-activated T-cells. Plays a critical role in CD40-mediated class switching of immunoglobin isotypes. This chain is Inducible T-cell costimulator (Icos), found in Rattus norvegicus (Rat).